An 85-amino-acid polypeptide reads, in one-letter code: Large ribosomal subunit protein bL27 (85 aa).

Residues 1 to 25 (MAHKKAGGSSRNGRDSHSKRLGVKH) are disordered.

The protein belongs to the bacterial ribosomal protein bL27 family.

This chain is Large ribosomal subunit protein bL27, found in Buchnera aphidicola subsp. Baizongia pistaciae (strain Bp).